A 280-amino-acid polypeptide reads, in one-letter code: 3-methyl-2-oxobutanoate hydroxymethyltransferase (280 aa).

Mg(2+) is bound by residues D60 and D99. Residues 60 to 61 (DS), D99, and K129 contribute to the 3-methyl-2-oxobutanoate site. E131 lines the Mg(2+) pocket. Catalysis depends on E198, which acts as the Proton acceptor.

Belongs to the PanB family. Homodecamer; pentamer of dimers. Requires Mg(2+) as cofactor.

It is found in the cytoplasm. It carries out the reaction 3-methyl-2-oxobutanoate + (6R)-5,10-methylene-5,6,7,8-tetrahydrofolate + H2O = 2-dehydropantoate + (6S)-5,6,7,8-tetrahydrofolate. Its pathway is cofactor biosynthesis; (R)-pantothenate biosynthesis; (R)-pantoate from 3-methyl-2-oxobutanoate: step 1/2. Catalyzes the reversible reaction in which hydroxymethyl group from 5,10-methylenetetrahydrofolate is transferred onto alpha-ketoisovalerate to form ketopantoate. In Thermobifida fusca (strain YX), this protein is 3-methyl-2-oxobutanoate hydroxymethyltransferase.